The primary structure comprises 235 residues: Large ribosomal subunit protein uL1 (235 aa).

Belongs to the universal ribosomal protein uL1 family. In terms of assembly, part of the 50S ribosomal subunit.

Binds directly to 23S rRNA. The L1 stalk is quite mobile in the ribosome, and is involved in E site tRNA release. Its function is as follows. Protein L1 is also a translational repressor protein, it controls the translation of the L11 operon by binding to its mRNA. The polypeptide is Large ribosomal subunit protein uL1 (Blochmanniella floridana).